The primary structure comprises 311 residues: Ribosomal RNA small subunit methyltransferase H (311 aa).

S-adenosyl-L-methionine contacts are provided by residues 32–34 (AGH), aspartate 52, phenylalanine 79, aspartate 100, and glutamine 107.

This sequence belongs to the methyltransferase superfamily. RsmH family.

Its subcellular location is the cytoplasm. It catalyses the reaction cytidine(1402) in 16S rRNA + S-adenosyl-L-methionine = N(4)-methylcytidine(1402) in 16S rRNA + S-adenosyl-L-homocysteine + H(+). In terms of biological role, specifically methylates the N4 position of cytidine in position 1402 (C1402) of 16S rRNA. This is Ribosomal RNA small subunit methyltransferase H from Staphylococcus haemolyticus (strain JCSC1435).